A 68-amino-acid chain; its full sequence is DNA-directed RNA polymerase subunit Rpo10 (68 aa).

4 residues coordinate Zn(2+): Cys7, Cys10, Cys44, and Cys45.

Belongs to the archaeal Rpo10/eukaryotic RPB10 RNA polymerase subunit family. As to quaternary structure, part of the RNA polymerase complex. Zn(2+) serves as cofactor.

It is found in the cytoplasm. It catalyses the reaction RNA(n) + a ribonucleoside 5'-triphosphate = RNA(n+1) + diphosphate. DNA-dependent RNA polymerase (RNAP) catalyzes the transcription of DNA into RNA using the four ribonucleoside triphosphates as substrates. The chain is DNA-directed RNA polymerase subunit Rpo10 from Methanococcus maripaludis (strain C5 / ATCC BAA-1333).